The following is a 421-amino-acid chain: Putative bifunctional polynucleotide phosphatase/kinase (421 aa).

Residues 25-231 (DSYLKGIINN…SENLKTNYKL (207 aa)) are phosphatase. The segment at 235–415 (NPTEIIDEIE…DDPKWKRSFM (181 aa)) is kinase. 265–272 (GQPGSGKS) is an ATP binding site.

The protein in the N-terminal section; belongs to the DNA 3' phosphatase family.

The enzyme catalyses a 3'end (2'-deoxyribonucleotide 3'-phosphate)-DNA + H2O = a 3'-end 2'-deoxyribonucleotide-DNA + phosphate. It catalyses the reaction a 5'-end dephospho-2'-deoxyribonucleoside-DNA + ATP = a 5'-end 5'-phospho-2'-deoxyribonucleoside-DNA + ADP + H(+). The protein is Putative bifunctional polynucleotide phosphatase/kinase of Acanthamoeba polyphaga mimivirus (APMV).